The primary structure comprises 135 residues: Photosystem II extrinsic protein U (135 aa).

The N-terminal stretch at methionine 1 to alanine 29 is a signal peptide.

It belongs to the PsbU family. In terms of assembly, PSII is composed of 1 copy each of membrane proteins PsbA, PsbB, PsbC, PsbD, PsbE, PsbF, PsbH, PsbI, PsbJ, PsbK, PsbL, PsbM, PsbT, PsbX, PsbY, PsbZ, Psb30/Ycf12, peripheral proteins PsbO, CyanoQ (PsbQ), PsbU, PsbV and a large number of cofactors. It forms dimeric complexes.

The protein resides in the cellular thylakoid membrane. Functionally, one of the extrinsic, lumenal subunits of photosystem II (PSII). PSII is a light-driven water plastoquinone oxidoreductase, using light energy to abstract electrons from H(2)O, generating a proton gradient subsequently used for ATP formation. The extrinsic proteins stabilize the structure of photosystem II oxygen-evolving complex (OEC), the ion environment of oxygen evolution and protect the OEC against heat-induced inactivation. The chain is Photosystem II extrinsic protein U from Synechococcus sp. (strain CC9605).